A 351-amino-acid chain; its full sequence is uncharacterized protein (351 aa).

Mn(2+)-binding residues include D215, D226, H290, E319, and E333.

It belongs to the peptidase M24B family. Requires Mn(2+) as cofactor.

This is an uncharacterized protein from Staphylococcus aureus (strain USA300).